A 216-amino-acid polypeptide reads, in one-letter code: Ras-related protein Rab-2B (216 aa).

GTP contacts are provided by G16, V17, G18, K19, S20, C21, and T38. A Mg(2+)-binding site is contributed by S20. The short motif at L37–E42 is the Switch 1 element. Mg(2+)-binding residues include T38 and D61. The short motif at A63 to T72 is the Switch 2 element. G64, N119, K120, D122, A150, and K151 together coordinate GTP. Positions P189–S207 are enriched in polar residues. Residues P189 to C216 are disordered. Residues C215 and C216 are each lipidated (S-geranylgeranyl cysteine).

It belongs to the small GTPase superfamily. Rab family. Interacts (in GTP-bound form) with GARIN4 (via N-terminus). Interacts (in GTP-bound form) with GARIN5A. Interacts (in GTP-bound form) with GARIN1B. Interacts with VPS39 and VPS41. Requires Mg(2+) as cofactor.

Its subcellular location is the cell membrane. The protein resides in the endoplasmic reticulum membrane. The protein localises to the golgi apparatus membrane. It is found in the cytoplasmic vesicle. It localises to the secretory vesicle. Its subcellular location is the acrosome. The protein resides in the autophagosome membrane. It catalyses the reaction GTP + H2O = GDP + phosphate + H(+). With respect to regulation, regulated by guanine nucleotide exchange factors (GEFs) which promote the exchange of bound GDP for free GTP, GTPase activating proteins (GAPs) which increase the GTP hydrolysis activity, and GDP dissociation inhibitors (GDIs) which inhibit the dissociation of the nucleotide from the GTPase. Its function is as follows. The small GTPases Rab are key regulators of intracellular membrane trafficking, from the formation of transport vesicles to their fusion with membranes. Rabs cycle between active GTP-bound and inactive GDP-bound states. In their active state, drive transport of vesicular carriers from donor organelles to acceptor organelles to regulate the membrane traffic that maintains organelle identity and morphology. Regulates the compacted morphology of the Golgi. Promotes cytosolic DNA-induced innate immune responses. Regulates IFN responses against DNA viruses by regulating the CGAS-STING signaling axis. Together with RAB2A redundantly required for efficient autophagic flux. This is Ras-related protein Rab-2B (Rab2b) from Mus musculus (Mouse).